Here is a 380-residue protein sequence, read N- to C-terminus: Cytosolic acyl coenzyme A thioester hydrolase (380 aa).

Positions 50–168 (PCGACITGRI…TLWYVPLSLK (119 aa)) constitute a HotDog ACOT-type 1 domain. N66 is a catalytic residue. N6-acetyllysine is present on residues K168 and K198. The region spanning 224–338 (SYSQSSLIHL…FFTYVSLSQE (115 aa)) is the HotDog ACOT-type 2 domain. Residue D255 is part of the active site. An N6-acetyllysine modification is found at K283. A disordered region spans residues 350-380 (ETEDEKKRFEEGKGRYLQMKAKRQGHAEPQP). Residues 353–363 (DEKKRFEEGKG) are compositionally biased toward basic and acidic residues.

As to quaternary structure, homohexamer. Isoform 4 is expressed exclusively in brain.

It localises to the cytoplasm. It is found in the cytosol. Its subcellular location is the mitochondrion. It catalyses the reaction hexadecanoyl-CoA + H2O = hexadecanoate + CoA + H(+). The catalysed reaction is octanoyl-CoA + H2O = octanoate + CoA + H(+). It carries out the reaction dodecanoyl-CoA + H2O = dodecanoate + CoA + H(+). The enzyme catalyses (9Z)-octadecenoyl-CoA + H2O = (9Z)-octadecenoate + CoA + H(+). It catalyses the reaction tetradecanoyl-CoA + H2O = tetradecanoate + CoA + H(+). The catalysed reaction is decanoyl-CoA + H2O = decanoate + CoA + H(+). It carries out the reaction octadecanoyl-CoA + H2O = octadecanoate + CoA + H(+). The protein operates within lipid metabolism; fatty acid metabolism. Functionally, catalyzes the hydrolysis of acyl-CoAs into free fatty acids and coenzyme A (CoASH), regulating their respective intracellular levels. Preferentially hydrolyzes palmitoyl-CoA, but has a broad specificity acting on other fatty acyl-CoAs with chain-lengths of C8-C18. May play an important physiological function in brain. In Homo sapiens (Human), this protein is Cytosolic acyl coenzyme A thioester hydrolase (ACOT7).